A 320-amino-acid chain; its full sequence is Replication-associated protein ORF2 (320 aa).

Catalysis depends on O-(5'-phospho-DNA)-tyrosine intermediate residues tyrosine 188 and tyrosine 192.

It belongs to the microviridae Rep protein family.

The enzyme catalyses ATP + (deoxyribonucleotide)n-3'-hydroxyl + 5'-phospho-(deoxyribonucleotide)m = (deoxyribonucleotide)n+m + AMP + diphosphate.. In terms of biological role, plays an essential role in viral DNA replication. Binds the origin of replication and cleaves the dsDNA replicative form I (RFI) and becomes covalently bound to it via phosphotyrosine bond, generating the dsDNA replicative form II (RFII). In turn, viral DNA replication initiates at the 3'-OH of the cleavage site. After one round of rolling circle synthesis, protein ORF2 is linked to the newly synthesized ssDNA and joins the ends of the displaced strand to generate a circular single-stranded molecule ready to be packed into a virion. The sequence is that of Replication-associated protein ORF2 from Spiroplasma virus 4 (SpV4).